Consider the following 158-residue polypeptide: PTS system fructose-specific EIIB component (158 aa).

One can recognise a PTS EIIB type-2 domain in the interval 1–98 (MKLVAVTSCP…AEAVVQKAVE (98 aa)). Catalysis depends on C9, which acts as the Phosphocysteine intermediate. Phosphocysteine; by EIIA is present on C9. The segment at 104–147 (KTGSVTFGSGDDGEDADVGADDSSDDADAAESDEPVRRGGDPEK) is disordered. The segment covering 114–136 (DDGEDADVGADDSSDDADAAESD) has biased composition (acidic residues). Residues 137–147 (EPVRRGGDPEK) show a composition bias toward basic and acidic residues.

The protein resides in the cytoplasm. It catalyses the reaction D-fructose(out) + N(pros)-phospho-L-histidyl-[protein] = D-fructose 1-phosphate(in) + L-histidyl-[protein]. The phosphoenolpyruvate-dependent sugar phosphotransferase system (sugar PTS), a major carbohydrate active transport system, catalyzes the phosphorylation of incoming sugar substrates concomitantly with their translocation across the cell membrane. The enzyme II PtfABC PTS system is involved in fructose transport. In Haloferax volcanii (strain ATCC 29605 / DSM 3757 / JCM 8879 / NBRC 14742 / NCIMB 2012 / VKM B-1768 / DS2) (Halobacterium volcanii), this protein is PTS system fructose-specific EIIB component.